Reading from the N-terminus, the 380-residue chain is MNLKLTSINGGLKIEVHENSSQKSGITTGSVATAASVAALLKLVDKAPDIVKITAPTTTLTVEIEDTSFIDNNTARAIVKKPNYNDPDVTRGMEIISEVTLTNNSGVIEITGGDGVGRVTKPGLQIPVGEYAINPVPRKMIKENIMKYLPEDNGAIIKIIIPEGKKIAPKTMNSRLGIIDGISILGTTGIARPMSSKAYTDSLRVQIDVALANGYKDLLFVPGNIGTRIAKEKLVLDEDEIIEMSNFVGYMLEEAHKTGKIRSITLFGHAGKLIKIAAGIFNTKQSVADARREIMTAYAGLVGANKKTLHDIYNCITTEDVIKILDENNITTEVFELIANKIVELCSLKYEGIKFHAVIVKMNGEILTPSHIQNIPFNKK.

This sequence belongs to the CbiD family.

The catalysed reaction is Co-precorrin-5B + S-adenosyl-L-methionine = Co-precorrin-6A + S-adenosyl-L-homocysteine. It functions in the pathway cofactor biosynthesis; adenosylcobalamin biosynthesis; cob(II)yrinate a,c-diamide from sirohydrochlorin (anaerobic route): step 6/10. Functionally, catalyzes the methylation of C-1 in cobalt-precorrin-5B to form cobalt-precorrin-6A. In Methanosphaera stadtmanae (strain ATCC 43021 / DSM 3091 / JCM 11832 / MCB-3), this protein is Cobalt-precorrin-5B C(1)-methyltransferase.